Reading from the N-terminus, the 218-residue chain is Eukaryotic translation initiation factor 3 subunit K (218 aa).

An N-acetylalanine modification is found at A2. T28 carries the post-translational modification Phosphothreonine. Residues 42–204 (YDLEANLAVL…SIKPKNIVEK (163 aa)) enclose the PCI domain. S217 is modified (phosphoserine).

This sequence belongs to the eIF-3 subunit K family. In terms of assembly, component of the eukaryotic translation initiation factor 3 (eIF-3) complex, which is composed of 13 subunits: EIF3A, EIF3B, EIF3C, EIF3D, EIF3E, EIF3F, EIF3G, EIF3H, EIF3I, EIF3J, EIF3K, EIF3L and EIF3M. The eIF-3 complex appears to include 3 stable modules: module A is composed of EIF3A, EIF3B, EIF3G and EIF3I; module B is composed of EIF3F, EIF3H, and EIF3M; and module C is composed of EIF3C, EIF3D, EIF3E, EIF3K and EIF3L. EIF3C of module C binds EIF3B of module A and EIF3H of module B, thereby linking the three modules. EIF3J is a labile subunit that binds to the eIF-3 complex via EIF3B. The eIF-3 complex interacts with RPS6KB1 under conditions of nutrient depletion. Mitogenic stimulation leads to binding and activation of a complex composed of MTOR and RPTOR, leading to phosphorylation and release of RPS6KB1 and binding of EIF4B to eIF-3. Interacts with CCND3, but not with CCND1 and CCND2.

The protein localises to the nucleus. It is found in the cytoplasm. Functionally, component of the eukaryotic translation initiation factor 3 (eIF-3) complex, which is required for several steps in the initiation of protein synthesis. The eIF-3 complex associates with the 40S ribosome and facilitates the recruitment of eIF-1, eIF-1A, eIF-2:GTP:methionyl-tRNAi and eIF-5 to form the 43S pre-initiation complex (43S PIC). The eIF-3 complex stimulates mRNA recruitment to the 43S PIC and scanning of the mRNA for AUG recognition. The eIF-3 complex is also required for disassembly and recycling of post-termination ribosomal complexes and subsequently prevents premature joining of the 40S and 60S ribosomal subunits prior to initiation. The eIF-3 complex specifically targets and initiates translation of a subset of mRNAs involved in cell proliferation, including cell cycling, differentiation and apoptosis, and uses different modes of RNA stem-loop binding to exert either translational activation or repression. The protein is Eukaryotic translation initiation factor 3 subunit K of Bos taurus (Bovine).